A 181-amino-acid polypeptide reads, in one-letter code: Large ribosomal subunit protein uL5 (181 aa).

Belongs to the universal ribosomal protein uL5 family. As to quaternary structure, part of the 50S ribosomal subunit; part of the 5S rRNA/L5/L18/L25 subcomplex. Contacts the 5S rRNA and the P site tRNA. Forms a bridge to the 30S subunit in the 70S ribosome.

Functionally, this is one of the proteins that bind and probably mediate the attachment of the 5S RNA into the large ribosomal subunit, where it forms part of the central protuberance. In the 70S ribosome it contacts protein S13 of the 30S subunit (bridge B1b), connecting the 2 subunits; this bridge is implicated in subunit movement. Contacts the P site tRNA; the 5S rRNA and some of its associated proteins might help stabilize positioning of ribosome-bound tRNAs. This Mesomycoplasma hyopneumoniae (strain 232) (Mycoplasma hyopneumoniae) protein is Large ribosomal subunit protein uL5.